The chain runs to 240 residues: UDP-2,3-diacylglucosamine hydrolase (240 aa).

Residues D8, H10, D41, N79, and H114 each coordinate Mn(2+). 79 to 80 (NR) serves as a coordination point for substrate. D122, S160, N164, K167, and H195 together coordinate substrate. Mn(2+)-binding residues include H195 and H197.

This sequence belongs to the LpxH family. Requires Mn(2+) as cofactor.

It localises to the cell inner membrane. It carries out the reaction UDP-2-N,3-O-bis[(3R)-3-hydroxytetradecanoyl]-alpha-D-glucosamine + H2O = 2-N,3-O-bis[(3R)-3-hydroxytetradecanoyl]-alpha-D-glucosaminyl 1-phosphate + UMP + 2 H(+). Its pathway is glycolipid biosynthesis; lipid IV(A) biosynthesis; lipid IV(A) from (3R)-3-hydroxytetradecanoyl-[acyl-carrier-protein] and UDP-N-acetyl-alpha-D-glucosamine: step 4/6. In terms of biological role, hydrolyzes the pyrophosphate bond of UDP-2,3-diacylglucosamine to yield 2,3-diacylglucosamine 1-phosphate (lipid X) and UMP by catalyzing the attack of water at the alpha-P atom. Involved in the biosynthesis of lipid A, a phosphorylated glycolipid that anchors the lipopolysaccharide to the outer membrane of the cell. The chain is UDP-2,3-diacylglucosamine hydrolase from Shigella sonnei (strain Ss046).